A 244-amino-acid polypeptide reads, in one-letter code: Probable transcriptional regulatory protein XfasM23_0940 (244 aa).

The protein belongs to the TACO1 family.

It localises to the cytoplasm. This chain is Probable transcriptional regulatory protein XfasM23_0940, found in Xylella fastidiosa (strain M23).